The sequence spans 415 residues: MVVSVQEIGQRAKTAATDVAGLTITTRNDLLRQMSQALLDNQSAIMAANKEDIAAYANTLSQPMIKRLTLDQPTIKAIATSLLAVVALPDPLAGPFDTWQTHVDLKIVKRVVPLGVVAMIYEARPNVTIDAAALTLKSGNAVILRGGKEAIHSNTVLANILRDVLRDNALNPDIIQLITDTSHESVNVLLNMRDYVDVLIPRGSAKFIDFVVANATVPVIETGAGNTHIFVDQSADQKQAIAIIHNAKTQKPAVCNAAEKLLVHVAIAAEFIPKITEKLVRAHVELRGDQASHQLDPRISLASEQDWDTEYNDLIMGIKIVSGTNDAIDWINNHTTHHSETIISKSSENVAQFMNQVDAAVVYQNASSRFTDGFEFGFGAEIGISTQKLHARGPMGLPALTTIKYEVFGQGQIRE.

Belongs to the gamma-glutamyl phosphate reductase family.

The protein resides in the cytoplasm. It catalyses the reaction L-glutamate 5-semialdehyde + phosphate + NADP(+) = L-glutamyl 5-phosphate + NADPH + H(+). It functions in the pathway amino-acid biosynthesis; L-proline biosynthesis; L-glutamate 5-semialdehyde from L-glutamate: step 2/2. Catalyzes the NADPH-dependent reduction of L-glutamate 5-phosphate into L-glutamate 5-semialdehyde and phosphate. The product spontaneously undergoes cyclization to form 1-pyrroline-5-carboxylate. The protein is Gamma-glutamyl phosphate reductase of Leuconostoc citreum (strain KM20).